A 506-amino-acid polypeptide reads, in one-letter code: Galactose/methyl galactoside import ATP-binding protein MglA (506 aa).

ABC transporter domains lie at 14-249 (LEMS…VGRS) and 264-506 (VILE…SLHL). 46–53 (GENGAGKS) lines the ATP pocket.

The protein belongs to the ABC transporter superfamily. Galactose/methyl galactoside importer (TC 3.A.1.2.3) family. The complex is composed of one ATP-binding protein (MglA), two transmembrane proteins (MglC) and a solute-binding protein (MglB).

The protein resides in the cell inner membrane. The enzyme catalyses D-galactose(out) + ATP + H2O = D-galactose(in) + ADP + phosphate + H(+). It carries out the reaction methyl beta-D-galactoside(out) + ATP + H2O = methyl beta-D-galactoside(in) + ADP + phosphate + H(+). In terms of biological role, part of the ABC transporter complex MglABC involved in galactose/methyl galactoside import. Responsible for energy coupling to the transport system. The polypeptide is Galactose/methyl galactoside import ATP-binding protein MglA (Yersinia pestis bv. Antiqua (strain Antiqua)).